The chain runs to 124 residues: Ribonuclease pancreatic (124 aa).

Positions 1 to 13 are enriched in basic and acidic residues; sequence KETAAAKFERQHM. The disordered stretch occupies residues 1-24; that stretch reads KETAAAKFERQHMDSSTSSASSSN. Lys-7 and Arg-10 together coordinate substrate. The Proton acceptor role is filled by His-12. Cystine bridges form between Cys-26-Cys-84, Cys-40-Cys-95, Cys-58-Cys-110, and Cys-65-Cys-72. Residues 41-45, Lys-66, and Arg-85 contribute to the substrate site; that span reads KPVBT. His-119 (proton donor) is an active-site residue.

This sequence belongs to the pancreatic ribonuclease family. In terms of assembly, monomer. Interacts with and forms tight 1:1 complexes with RNH1. Dimerization of two such complexes may occur. Interaction with RNH1 inhibits this protein. Pancreas.

It localises to the secreted. It carries out the reaction an [RNA] containing cytidine + H2O = an [RNA]-3'-cytidine-3'-phosphate + a 5'-hydroxy-ribonucleotide-3'-[RNA].. It catalyses the reaction an [RNA] containing uridine + H2O = an [RNA]-3'-uridine-3'-phosphate + a 5'-hydroxy-ribonucleotide-3'-[RNA].. Endonuclease that catalyzes the cleavage of RNA on the 3' side of pyrimidine nucleotides. Acts on single-stranded and double-stranded RNA. The sequence is that of Ribonuclease pancreatic (RNASE1) from Boselaphus tragocamelus (Nilgai).